Reading from the N-terminus, the 530-residue chain is Autoinducer-2 kinase (530 aa).

This sequence belongs to the FGGY kinase family.

Its subcellular location is the cytoplasm. The catalysed reaction is (S)-4,5-dihydroxypentane-2,3-dione + ATP = (2S)-2-hydroxy-3,4-dioxopentyl phosphate + ADP + H(+). In terms of biological role, catalyzes the phosphorylation of autoinducer-2 (AI-2) to phospho-AI-2, which subsequently inactivates the transcriptional regulator LsrR and leads to the transcription of the lsr operon. Phosphorylates the ring-open form of (S)-4,5-dihydroxypentane-2,3-dione (DPD), which is the precursor to all AI-2 signaling molecules, at the C5 position. This is Autoinducer-2 kinase from Yersinia pestis bv. Antiqua (strain Antiqua).